The following is a 516-amino-acid chain: Serine carboxypeptidase II-3 (516 aa).

An N-terminal signal peptide occupies residues 1–20 (MKCTVVALVLLVAVQCLVLG). A propeptide spanning residues 21-77 (AGPAAAAKARRTRQGDYLNRLRGSPSSRASWESLAAVEEQTTTKAAGRPAPVAAAVE) is cleaved from the precursor. Cystine bridges form between cysteine 143–cysteine 391, cysteine 300–cysteine 315, and cysteine 339–cysteine 359. N-linked (GlcNAc...) asparagine glycans are attached at residues asparagine 194 and asparagine 205. Residue serine 236 is part of the active site. The N-linked (GlcNAc...) asparagine glycan is linked to asparagine 301. A propeptide spans 342–352 (EKLVTPPIAPS) (linker peptide). The N-linked (GlcNAc...) asparagine glycan is linked to asparagine 380. Residues aspartate 427 and histidine 484 contribute to the active site.

Belongs to the peptidase S10 family. In terms of assembly, carboxypeptidase II is a dimer, where each monomer is composed of two chains linked by a disulfide bond. Post-translationally, the linker peptide is endoproteolytically excised during enzyme maturation.

The catalysed reaction is Preferential release of a C-terminal arginine or lysine residue.. This chain is Serine carboxypeptidase II-3 (CXP;2-3), found in Hordeum vulgare (Barley).